A 572-amino-acid polypeptide reads, in one-letter code: Urease subunit alpha (572 aa).

The region spanning Gly-134–Phe-572 is the Urease domain. Ni(2+) contacts are provided by His-139, His-141, and Lys-222. Lys-222 is subject to N6-carboxylysine. His-224 provides a ligand contact to substrate. Residues His-251 and His-277 each contribute to the Ni(2+) site. The Proton donor role is filled by His-325. Asp-365 provides a ligand contact to Ni(2+).

It belongs to the metallo-dependent hydrolases superfamily. Urease alpha subunit family. In terms of assembly, heterotrimer of UreA (gamma), UreB (beta) and UreC (alpha) subunits. Three heterotrimers associate to form the active enzyme. The cofactor is Ni cation. Carboxylation allows a single lysine to coordinate two nickel ions.

Its subcellular location is the cytoplasm. It catalyses the reaction urea + 2 H2O + H(+) = hydrogencarbonate + 2 NH4(+). The protein operates within nitrogen metabolism; urea degradation; CO(2) and NH(3) from urea (urease route): step 1/1. This Polaromonas sp. (strain JS666 / ATCC BAA-500) protein is Urease subunit alpha.